We begin with the raw amino-acid sequence, 76 residues long: Repressor protein of division inhibition gene dicB (76 aa).

The DNA-binding element occupies 13–33; it reads KTKLAQAAGIRLASLYSWKGD.

Its function is as follows. This protein is a repressor of division inhibition gene dicB. The polypeptide is Repressor protein of division inhibition gene dicB (dicC) (Escherichia coli (strain K12)).